A 54-amino-acid polypeptide reads, in one-letter code: Relaxin (54 aa).

Gln1 is modified (pyrrolidone carboxylic acid). Cystine bridges form between Cys10-Cys41, Cys22-Cys54, and Cys40-Cys45.

Belongs to the insulin family. Heterodimer of a B chain and an A chain linked by two disulfide bonds.

It localises to the secreted. In terms of biological role, relaxin is an ovarian hormone that acts with estrogen to produce dilatation of the birth canal in many mammals. This Balaenoptera acutorostrata (Common minke whale) protein is Relaxin.